Here is a 1042-residue protein sequence, read N- to C-terminus: Carbamoyl phosphate synthase large chain (1042 aa).

The segment at 1-417 (MTEDSRTILL…SLLKALRSSE (417 aa)) is carboxyphosphate synthetic domain. Residues Arg127, Arg182, Gly188, Gly189, Glu221, Ile223, Glu228, Gly254, Ile255, His256, Gln297, and Glu314 each contribute to the ATP site. An ATP-grasp 1 domain is found at 131–343 (RQRMADLGQP…IARVTAKVAL (213 aa)). 3 residues coordinate Mg(2+): Gln297, Glu314, and Asn316. 3 residues coordinate Mn(2+): Gln297, Glu314, and Asn316. An oligomerization domain region spans residues 418–558 (YDPSVDWATV…SQGSTGSDVR (141 aa)). The segment at 559-947 (ADRDAHSVVI…WKAQVAASNA (389 aa)) is carbamoyl phosphate synthetic domain. The region spanning 689-880 (NRLLDERDIS…IAKLAAKVMA (192 aa)) is the ATP-grasp 2 domain. 10 residues coordinate ATP: Arg725, Glu764, Leu766, Glu771, Gly796, Val797, His798, Ser799, Gln839, and Glu851. The Mg(2+) site is built by Gln839, Glu851, and Asn853. 3 residues coordinate Mn(2+): Gln839, Glu851, and Asn853. The region spanning 947–1042 (APVPGSTAVV…DRPVNDETWG (96 aa)) is the MGS-like domain. The allosteric domain stretch occupies residues 948 to 1042 (PVPGSTAVVD…DRPVNDETWG (95 aa)).

Belongs to the CarB family. As to quaternary structure, composed of two chains; the small (or glutamine) chain promotes the hydrolysis of glutamine to ammonia, which is used by the large (or ammonia) chain to synthesize carbamoyl phosphate. Tetramer of heterodimers (alpha,beta)4. It depends on Mg(2+) as a cofactor. The cofactor is Mn(2+).

The catalysed reaction is hydrogencarbonate + L-glutamine + 2 ATP + H2O = carbamoyl phosphate + L-glutamate + 2 ADP + phosphate + 2 H(+). It carries out the reaction hydrogencarbonate + NH4(+) + 2 ATP = carbamoyl phosphate + 2 ADP + phosphate + 2 H(+). It functions in the pathway amino-acid biosynthesis; L-arginine biosynthesis; carbamoyl phosphate from bicarbonate: step 1/1. The protein operates within pyrimidine metabolism; UMP biosynthesis via de novo pathway; (S)-dihydroorotate from bicarbonate: step 1/3. In terms of biological role, large subunit of the glutamine-dependent carbamoyl phosphate synthetase (CPSase). CPSase catalyzes the formation of carbamoyl phosphate from the ammonia moiety of glutamine, carbonate, and phosphate donated by ATP, constituting the first step of 2 biosynthetic pathways, one leading to arginine and/or urea and the other to pyrimidine nucleotides. The large subunit (synthetase) binds the substrates ammonia (free or transferred from glutamine from the small subunit), hydrogencarbonate and ATP and carries out an ATP-coupled ligase reaction, activating hydrogencarbonate by forming carboxy phosphate which reacts with ammonia to form carbamoyl phosphate. The chain is Carbamoyl phosphate synthase large chain from Halobacterium salinarum (strain ATCC 700922 / JCM 11081 / NRC-1) (Halobacterium halobium).